Reading from the N-terminus, the 230-residue chain is 2,3-bisphosphoglycerate-dependent phosphoglycerate mutase (230 aa).

Substrate is bound by residues R8 to N15, T21 to G22, R60, E87 to Y90, K98, R114 to R115, and G183 to N184. Catalysis depends on H9, which acts as the Tele-phosphohistidine intermediate. The active-site Proton donor/acceptor is E87.

This sequence belongs to the phosphoglycerate mutase family. BPG-dependent PGAM subfamily.

The enzyme catalyses (2R)-2-phosphoglycerate = (2R)-3-phosphoglycerate. The protein operates within carbohydrate degradation; glycolysis; pyruvate from D-glyceraldehyde 3-phosphate: step 3/5. Its function is as follows. Catalyzes the interconversion of 2-phosphoglycerate and 3-phosphoglycerate. The protein is 2,3-bisphosphoglycerate-dependent phosphoglycerate mutase of Streptococcus thermophilus (strain CNRZ 1066).